The following is a 142-amino-acid chain: Glia maturation factor gamma (142 aa).

S2 is subject to N-acetylserine. The ADF-H domain occupies 4 to 139; that stretch reads SLVVCDVDPE…NETWLKEKLA (136 aa).

Belongs to the actin-binding proteins ADF family. GMF subfamily. As to expression, expressed in rat thymus, testis, and spleen. Is present predominantly in proliferative and differentiative organs.

This chain is Glia maturation factor gamma (Gmfg), found in Rattus norvegicus (Rat).